Reading from the N-terminus, the 222-residue chain is MAFGDVTTPQGLKELNAFLADNSYISGYTPSKADLSVFDALGKAPSADNVNVARWYRHIASFEAAERAAWSGTPLPQLAGGKPTVAAAAKPAADDDDDVDLFGSDDEEDEEAERIKQERVAAYAAKKSKKPALIAKSSVLLDVKPWDDETDMKEMENNVRTIEMDGLLWGASKLVPVGYGINKLQIMCVIEDDKVSIDLLQEKIEEFEDFVQSVDIAAFNKI.

The segment at 90–111 is disordered; that stretch reads KPAADDDDDVDLFGSDDEEDEE. Residues 94–111 are compositionally biased toward acidic residues; it reads DDDDDVDLFGSDDEEDEE. A Phosphoserine modification is found at serine 104.

The protein belongs to the EF-1-beta/EF-1-delta family. As to quaternary structure, EF-1 is composed of 4 subunits: alpha, beta, beta' and gamma. Phosphorylation affects the GDP/GTP exchange rate.

EF-1-beta and EF-1-delta stimulate the exchange of GDP bound to EF-1-alpha to GTP. The chain is Probable elongation factor 1-beta from Drosophila melanogaster (Fruit fly).